Reading from the N-terminus, the 476-residue chain is PRAME family member 6 (476 aa).

Residues 97–124 (RWKLQVLDLQDVCENFWMVWSEAMARGC) form an LRR 1; degenerate repeat. An LRR 2; degenerate repeat occupies 179-203 (HLCCKKLKILGMPFRNIRSILKMVN). Residues 204–230 (LDCIQEVEVNCKWVLPILTQFTPYLGH) form an LRR 3; degenerate repeat. One copy of the LRR 4; degenerate repeat lies at 231–266 (MRNLQKLVLSHMDVSRYVSPEQKKEIVTQFTTQFLK). LRR repeat units lie at residues 267–292 (LCCL…LSCL), 293–324 (KTSL…SQLK), 325–345 (TLDL…QILL), 349–376 (AATL…ALSR), and 377–401 (CFEL…LLSH).

The protein belongs to the PRAME family. Component of a CRL2 E3 ubiquitin-protein ligase complex, also named ECS (Elongin BC-CUL2/5-SOCS-box protein) complex, composed of CUL2, Elongin BC (ELOB and ELOC), RBX1 and substrate-specific adapter PRAMEF6.

The protein operates within protein modification; protein ubiquitination. In terms of biological role, substrate-recognition component of a Cul2-RING (CRL2) E3 ubiquitin-protein ligase complex, which mediates ubiquitination of target proteins, leading to their degradation. The CRL2(PRAMEF6) complex mediates ubiquitination and degradation of truncated MSRB1/SEPX1 selenoproteins produced by failed UGA/Sec decoding. This chain is PRAME family member 6, found in Homo sapiens (Human).